Consider the following 145-residue polypeptide: Large ribosomal subunit protein uL14m (145 aa).

A mitochondrion-targeting transit peptide spans 1–30; sequence MAALTGLWGSFAHVSRAFSQRCFSTSGSLS.

This sequence belongs to the universal ribosomal protein uL14 family. Component of the mitochondrial ribosome large subunit (39S) which comprises a 16S rRNA and about 50 distinct proteins. Interacts with MALSU1.

The protein localises to the mitochondrion. Its function is as follows. May form part of 2 intersubunit bridges in the assembled ribosome. Upon binding to MALSU1, intersubunit bridge formation is blocked, preventing ribosome formation and repressing translation. This is Large ribosomal subunit protein uL14m (Mrpl14) from Mus musculus (Mouse).